Reading from the N-terminus, the 105-residue chain is Probable tetrachloroethene reductive dehalogenase membrane anchor protein (105 aa).

Transmembrane regions (helical) follow at residues 3-23 (IYDV…QYGI), 35-55 (IPLQ…LAWG), and 66-86 (AIGM…IITY).

Belongs to the PceB family.

Its subcellular location is the cell membrane. In terms of biological role, may act as a membrane anchor for the tetrachloroethene reductive dehalogenase PceA. The sequence is that of Probable tetrachloroethene reductive dehalogenase membrane anchor protein from Desulfitobacterium hafniense (Desulfitobacterium frappieri).